A 79-amino-acid chain; its full sequence is Small ribosomal subunit protein bS16c (79 aa).

This sequence belongs to the bacterial ribosomal protein bS16 family.

It localises to the plastid. The protein resides in the chloroplast. The sequence is that of Small ribosomal subunit protein bS16c from Staurastrum punctulatum (Green alga).